The sequence spans 279 residues: Coiled-coil domain-containing protein 117 (279 aa).

The tract at residues 1–82 is disordered; sequence MAALGRPFSG…REEEEDDDCP (82 aa). Arg-48 is subject to Omega-N-methylarginine. A Phosphoserine modification is found at Ser-53. Residues 63-72 show a composition bias toward basic residues; that stretch reads VSVHCKKKHK. The stretch at 141-168 forms a coiled coil; sequence QCEVARRKLQEIEDRIIDEDEEVEADRN. The segment at 217–279 is disordered; sequence LLSDKPKPSS…ATSTEEEMEL (63 aa). 2 stretches are compositionally biased toward polar residues: residues 224-235 and 262-272; these read PSSNTKNYTGES and SLYNSLETATS.

Interacts with CIAO2B; the interaction is direct. Interacts with MMS19; the interaction is indirect.

Its subcellular location is the cytoplasm. It is found in the cytoskeleton. It localises to the spindle. The protein localises to the nucleus. Its function is as follows. Facilitates DNA repair, cell cycle progression, and cell proliferation through its interaction with CIAO2B. This is Coiled-coil domain-containing protein 117 from Homo sapiens (Human).